The sequence spans 43 residues: Defensin-B (43 aa).

Cystine bridges form between cysteine 3-cysteine 34, cysteine 20-cysteine 39, and cysteine 24-cysteine 41.

It localises to the secreted. Its function is as follows. Antibacterial protein. Strong activity against the Gram-positive bacteria M.luteus, B.megaterium and S.aureus. Reduced activity against Gram-positive bacterium B.subtilis and weak activity against Gram-negative bacterium X.japonicus. No detectable activity against the Gram-negative bacteria E.asbriae, E.coli, P.aeruginosa and S.marcescens. The chain is Defensin-B from Anomala cuprea (Cupreous chafer beetle).